The chain runs to 164 residues: UPF0178 protein BRADO3147 (164 aa).

The protein belongs to the UPF0178 family.

The chain is UPF0178 protein BRADO3147 from Bradyrhizobium sp. (strain ORS 278).